A 380-amino-acid polypeptide reads, in one-letter code: Mitogen-activated protein kinase 3 (380 aa).

Ala-2 bears the N-acetylalanine mark. A Protein kinase domain is found at Tyr-43–Leu-331. Residues Ile-49–Val-57 and Lys-72 each bind ATP. The Proton acceptor role is filled by Asp-167. Position 199 is a phosphothreonine (Thr-199). A Phosphothreonine; by MAP2K1 and MAP2K2 modification is found at Thr-203. Residues Thr-203–Tyr-205 carry the TXY motif. A Phosphotyrosine; by MAP2K1 and MAP2K2 modification is found at Tyr-205. Position 208 is a phosphothreonine; by autocatalysis (Thr-208).

Belongs to the protein kinase superfamily. CMGC Ser/Thr protein kinase family. MAP kinase subfamily. In terms of assembly, binds both upstream activators and downstream substrates in multimolecular complexes. Found in a complex with at least BRAF, HRAS, MAP2K1/MEK1, MAPK3 and RGS14. Interacts with TPR. Interacts with ADAM15, ARRB2, CANX, DAPK1 (via death domain), HSF4, IER3, MAP2K1/MEK1, NISCH, and SGK1. Interacts with MORG1. Interacts with PEA15. Interacts with isoform 1 of MKNK2 and this binding prevents from dephosphorylation and inactivation. Interacts with CDKN2AIP. Interacts with HSF1 (via D domain and preferentially with hyperphosphorylated form); this interaction occurs upon heat shock. Interacts with CAVIN4. Interacts with GIT1; this interaction is necessary for MAPK3 localization to focal adhesions. Interacts with ZNF263. Interacts with EBF4. It depends on Mg(2+) as a cofactor. Dually phosphorylated on Thr-203 and Tyr-205, which activates the enzyme. Ligand-activated ALK induces tyrosine phosphorylation. Dephosphorylated by PTPRJ at Tyr-205. Autophosphorylated on threonine and tyrosine residues in vitro. Phosphorylated upon FLT3 and KIT signaling. In terms of processing, ubiquitinated by TRIM15 via 'Lys-63'-linked ubiquitination; leading to activation. Deubiquitinated by CYLD.

The protein resides in the cytoplasm. It is found in the nucleus. The protein localises to the membrane. Its subcellular location is the caveola. It localises to the cell junction. The protein resides in the focal adhesion. It carries out the reaction L-seryl-[protein] + ATP = O-phospho-L-seryl-[protein] + ADP + H(+). The catalysed reaction is L-threonyl-[protein] + ATP = O-phospho-L-threonyl-[protein] + ADP + H(+). With respect to regulation, phosphorylated by MAP2K1/MEK1 and MAP2K2/MEK2 on Thr-203 and Tyr-205 in response to external stimuli like insulin or NGF. Both phosphorylations are required for activity. This phosphorylation causes dramatic conformational changes, which enable full activation and interaction of MAPK1/ERK2 with its substrates. Dephosphorylated and inactivated by DUSP3, DUSP6 and DUSP9. Serine/threonine kinase which acts as an essential component of the MAP kinase signal transduction pathway. MAPK1/ERK2 and MAPK3/ERK1 are the 2 MAPKs which play an important role in the MAPK/ERK cascade. They participate also in a signaling cascade initiated by activated KIT and KITLG/SCF. Depending on the cellular context, the MAPK/ERK cascade mediates diverse biological functions such as cell growth, adhesion, survival and differentiation through the regulation of transcription, translation, cytoskeletal rearrangements. The MAPK/ERK cascade also plays a role in initiation and regulation of meiosis, mitosis, and postmitotic functions in differentiated cells by phosphorylating a number of transcription factors. About 160 substrates have already been discovered for ERKs. Many of these substrates are localized in the nucleus, and seem to participate in the regulation of transcription upon stimulation. However, other substrates are found in the cytosol as well as in other cellular organelles, and those are responsible for processes such as translation, mitosis and apoptosis. Moreover, the MAPK/ERK cascade is also involved in the regulation of the endosomal dynamics, including lysosome processing and endosome cycling through the perinuclear recycling compartment (PNRC); as well as in the fragmentation of the Golgi apparatus during mitosis. The substrates include transcription factors (such as ATF2, BCL6, ELK1, ERF, FOS, HSF4 or SPZ1), cytoskeletal elements (such as CANX, CTTN, GJA1, MAP2, MAPT, PXN, SORBS3 or STMN1), regulators of apoptosis (such as BAD, BTG2, CASP9, DAPK1, IER3, MCL1 or PPARG), regulators of translation (such as EIF4EBP1) and a variety of other signaling-related molecules (like ARHGEF2, DEPTOR, FRS2 or GRB10). Protein kinases (such as RAF1, RPS6KA1/RSK1, RPS6KA3/RSK2, RPS6KA2/RSK3, RPS6KA6/RSK4, SYK, MKNK1/MNK1, MKNK2/MNK2, RPS6KA5/MSK1, RPS6KA4/MSK2, MAPKAPK3 or MAPKAPK5) and phosphatases (such as DUSP1, DUSP4, DUSP6 or DUSP16) are other substrates which enable the propagation the MAPK/ERK signal to additional cytosolic and nuclear targets, thereby extending the specificity of the cascade. This Mus musculus (Mouse) protein is Mitogen-activated protein kinase 3 (Mapk3).